The sequence spans 684 residues: Collagen alpha-3(IX) chain (684 aa).

The first 25 residues, 1–25, serve as a signal peptide directing secretion; the sequence is MAGPRACAPLLLLLLLGELLAAAGA. 2 disordered regions span residues 26 to 521 and 548 to 665; these read QRVG…KEAS and LAPG…CDTS. The triple-helical region 3 (COL3) stretch occupies residues 29–519; it reads GLPGPPGPPG…TGKPGVPGKE (491 aa). 2 stretches are compositionally biased toward pro residues: residues 31 to 42 and 55 to 64; these read PGPPGPPGPPGK and PGLPGPPGPK. Low complexity predominate over residues 66–82; it reads APGKPGKPGEAGLPGLP. Gly residues predominate over residues 130 to 139; that stretch reads GPPGGIGLRG. Pro residues-rich tracts occupy residues 140–161 and 177–188; these read PPGP…PPGH and ICPPGPPGPPGM. Positions 200–212 are enriched in basic and acidic residues; that stretch reads EQGEVGKDGEKGD. A compositionally biased stretch (low complexity) spans 221-237; it reads LPGSVGLQGPRGLRGLP. 2 stretches are compositionally biased toward basic and acidic residues: residues 264–282 and 344–356; these read AGDR…KGDL and SKGE…RAGE. Positions 423 to 425 match the Cell attachment site motif; it reads RGD. N483 carries an N-linked (GlcNAc...) asparagine glycan. The segment covering 498 to 507 has biased composition (low complexity); sequence LGLQGVPGVP. The nonhelical region 3 (NC3) stretch occupies residues 520-550; that stretch reads ASEQRIRELCGGMISEQIAQLAAHLRKPLAP. The segment at 551–630 is triple-helical region 2 (COL2); that stretch reads GSIGRPGPAG…QGPQGVPGTS (80 aa). A compositionally biased stretch (pro residues) spans 558–568; it reads PAGPPGPPGPP. The span at 570 to 586 shows a compositional bias: low complexity; sequence SIGHPGARGPPGYRGPT. The Cell attachment site motif lies at 601–603; that stretch reads RGD. A compositionally biased stretch (low complexity) spans 617–628; that stretch reads DQGPQGPQGVPG. The nonhelical region 2 (NC2) stretch occupies residues 631-632; the sequence is KD. The interval 633-661 is triple-helical region 1 (COL1); that stretch reads GQDGAPGEPGPPGDPGLPGAIGAQGTPGI. Positions 662 to 684 are nonhelical region 1 (NC1); the sequence is CDTSACQGAVLGGVGEKSGSRSS.

This sequence belongs to the fibril-associated collagens with interrupted helices (FACIT) family. Heterotrimer of an alpha 1(IX), an alpha 2(IX) and an alpha 3(IX) chain. Post-translationally, covalently linked to the telopeptides of type II collagen by lysine-derived cross-links. Prolines at the third position of the tripeptide repeating unit (G-X-Y) are hydroxylated in some or all of the chains.

Its subcellular location is the secreted. The protein resides in the extracellular space. The protein localises to the extracellular matrix. In terms of biological role, structural component of hyaline cartilage and vitreous of the eye. This chain is Collagen alpha-3(IX) chain (COL9A3), found in Homo sapiens (Human).